The sequence spans 268 residues: GTP cyclohydrolase FolE2 (268 aa).

Belongs to the GTP cyclohydrolase IV family.

It carries out the reaction GTP + H2O = 7,8-dihydroneopterin 3'-triphosphate + formate + H(+). It functions in the pathway cofactor biosynthesis; 7,8-dihydroneopterin triphosphate biosynthesis; 7,8-dihydroneopterin triphosphate from GTP: step 1/1. Converts GTP to 7,8-dihydroneopterin triphosphate. This chain is GTP cyclohydrolase FolE2, found in Methylococcus capsulatus (strain ATCC 33009 / NCIMB 11132 / Bath).